A 155-amino-acid chain; its full sequence is uncharacterized protein (155 aa).

An N-acetyltransferase domain is found at 6-155 (LRIELGEETN…RDMVRLYLDL (150 aa)). Residues 69-71 (IAV), 77-82 (KKGFGK), and 111-117 (QLSLYQK) contribute to the CoA site.

Probable N-acetyltransferase. This is an uncharacterized protein from Bacillus subtilis (strain 168).